A 352-amino-acid chain; its full sequence is Putative squamosa promoter-binding-like protein 19 (352 aa).

The disordered stretch occupies residues 68–88 (AAAPATRRARGGSGGGGGGGG). Over residues 78 to 88 (GGSGGGGGGGG) the composition is skewed to gly residues. The segment at 90–167 (AEACSVDGCR…DGHNRRRRKP (78 aa)) adopts an SBP-type zinc-finger fold. Zn(2+) contacts are provided by cysteine 93, cysteine 98, cysteine 115, histidine 118, cysteine 134, cysteine 137, histidine 141, and cysteine 153. Positions 150–166 (KKSCRKRLDGHNRRRRK) match the Bipartite nuclear localization signal motif. Residues 152–174 (SCRKRLDGHNRRRRKPQHDALNP) form a disordered region.

Its subcellular location is the nucleus. Functionally, trans-acting factor that binds specifically to the consensus nucleotide sequence 5'-TNCGTACAA-3'. The polypeptide is Putative squamosa promoter-binding-like protein 19 (SPL19) (Oryza sativa subsp. japonica (Rice)).